The chain runs to 445 residues: Inner membrane metabolite transport protein YgcS (445 aa).

Over 1 to 22 (MNTSPVRMDDLPLNRFHCRIAA) the chain is Cytoplasmic. A helical membrane pass occupies residues 23–43 (LTFGAHLTDGYVLGVIGYAII). Residues 44-56 (QLTPAMQLTPFMA) lie on the Periplasmic side of the membrane. Residues 57-77 (GMIGGSALLGLFLGSLVLGWI) traverse the membrane as a helical segment. Residues 78–85 (SDHIGRQK) lie on the Cytoplasmic side of the membrane. The helical transmembrane segment at 86-106 (IFTFSFLLITLASFLQFFATT) threads the bilayer. Residues 107 to 114 (PEHLIGLR) are Periplasmic-facing. A helical membrane pass occupies residues 115-135 (ILIGIGLGGDYSVGHTLLAEF). At 136–142 (SPRRHRG) the chain is on the cytoplasmic side. The helical transmembrane segment at 143 to 163 (ILLGAFSVVWTVGYVLASIAG) threads the bilayer. Over 164-175 (HHFISENPEAWR) the chain is Periplasmic. A helical transmembrane segment spans residues 176-196 (WLLASAALPALLITLLRWGTP). Over 197–253 (ESPRWLLRQGRFAEAHAIVHRYFGPHVLLGDEVVTATHKHIKTLFSSRYWRRTAFNS) the chain is Cytoplasmic. The helical transmembrane segment at 254 to 274 (VFFVCLVIPWFVIYTWLPTIA) threads the bilayer. At 275–286 (QTIGLEDALTAS) the chain is on the periplasmic side. Residues 287–307 (LMLNALLIVGALLGLVLTHLL) traverse the membrane as a helical segment. Residues 308 to 311 (AHRK) are Cytoplasmic-facing. A helical transmembrane segment spans residues 312-332 (FLLGSFLLLAATLVVMACLPS). The Periplasmic segment spans residues 333–337 (GSSLT). The chain crosses the membrane as a helical span at residues 338–358 (LLLFVLFSTTISAVSNLVGIL). Residues 359–369 (PAESFPTDIRS) are Cytoplasmic-facing. A helical membrane pass occupies residues 370 to 390 (LGVGFATAMSRLGAAVSTGLL). The Periplasmic segment spans residues 391–400 (PWVLAQWGMQ). The chain crosses the membrane as a helical span at residues 401–421 (VTLLLLATVLLVGFVVTWLWA). Over 422 to 445 (PETKALPLVAAGNVGGANEHSVSV) the chain is Cytoplasmic.

It belongs to the major facilitator superfamily. Sugar transporter (TC 2.A.1.1) family.

The protein localises to the cell inner membrane. The chain is Inner membrane metabolite transport protein YgcS (ygcS) from Escherichia coli (strain K12).